The primary structure comprises 189 residues: GTPase KRas (189 aa).

N-acetylmethionine is present on methionine 1. N-acetylthreonine; in GTPase KRas, N-terminally processed is present on threonine 2. GTP contacts are provided by residues 10 to 18, 29 to 35, and 59 to 60; these read GAGGVGKSA, VDEYDPT, and AG. The Effector region motif lies at 32 to 40; it reads YDPTIEDSY. N6-acetyllysine is present on lysine 104. Position 116–119 (116–119) interacts with GTP; that stretch reads NKCD. A hypervariable region region spans residues 166-185; that stretch reads YRLKKISKEEKTPGCVKIKK. Lysine 170 participates in a covalent cross-link: Glycyl lysine isopeptide (Lys-Gly) (interchain with G-Cter in ubiquitin). Cysteine 180 is lipidated: S-palmitoyl cysteine. Residues lysine 182, lysine 184, and lysine 185 are each lipidated (N6-palmitoyl lysine). Cysteine methyl ester is present on cysteine 186. The S-farnesyl cysteine moiety is linked to residue cysteine 186. A propeptide spans 187-189 (removed in mature form); that stretch reads VIM.

Belongs to the small GTPase superfamily. Ras family. As to quaternary structure, interacts with PHLPP. Interacts (active GTP-bound form preferentially) with RGS14. Interacts (when farnesylated) with PDE6D; this promotes dissociation from the cell membrane. Interacts with SOS1. Interacts (when farnesylated) with GPR31. Interacts with RAP1GDS1. Interacts (active GTP-bound form) with both SHOC2 and PP1c (all isoforms) to form a tertiary complex; SHOC2 and PP1c preferably bind M-Ras/MRAS, but they also bind K-Ras/KRAS, N-Ras/NRAS and H-Ras/HRAS. Interacts (GTP-bound form) with MAPKAP1/SIN1; inhibiting K-Ras/KRAS activity. In terms of assembly, interacts (when farnesylated) with GPR31. Acetylation at Lys-104 prevents interaction with guanine nucleotide exchange factors (GEFs). In terms of processing, ubiquitinated by the BCR(LZTR1) E3 ubiquitin ligase complex at Lys-170 in a non-degradative manner, leading to inhibit Ras signaling by decreasing Ras association with membranes. Post-translationally, palmitoylated at Lys-182, Lys-184 and Lys-185. Lysine-depalmitoylation by SIRT2 promotes its localization to endomembranes in endocytic pathways.

The protein resides in the cell membrane. Its subcellular location is the endomembrane system. It localises to the cytoplasm. The protein localises to the cytosol. The catalysed reaction is GTP + H2O = GDP + phosphate + H(+). Alternates between an inactive form bound to GDP and an active form bound to GTP. Activated by a guanine nucleotide-exchange factor (GEF) and inactivated by a GTPase-activating protein (GAP). Interaction with SOS1 promotes exchange of bound GDP to GTP. Functionally, ras proteins bind GDP/GTP and possess intrinsic GTPase activity. Plays an important role in the regulation of cell proliferation. Plays a role in promoting oncogenic events by inducing transcriptional silencing of tumor suppressor genes (TSGs) in colorectal cancer (CRC) cells in a ZNF304-dependent manner. This chain is GTPase KRas (Kras), found in Rattus norvegicus (Rat).